Reading from the N-terminus, the 183-residue chain is Ribosome-recycling factor (183 aa).

This sequence belongs to the RRF family.

It localises to the cytoplasm. Responsible for the release of ribosomes from messenger RNA at the termination of protein biosynthesis. May increase the efficiency of translation by recycling ribosomes from one round of translation to another. The chain is Ribosome-recycling factor from Mycoplasma genitalium (strain ATCC 33530 / DSM 19775 / NCTC 10195 / G37) (Mycoplasmoides genitalium).